The following is a 525-amino-acid chain: MWEAQFLGLLFLQPLWVAPVKPLQPGAEVPVVWAQEGAPAQLPCSPTIPLQDLSLLRRAGVTWQHQPDSGPPAAAPGHPLAPGPHPAAPSSWGPRPRRYTVLSVGPGGLRSGRLPLQPRVQLDERGRQRGDFSLWLRPARRADAGEYRAAVHLRDRALSCRLRLRLGQASMTASPPGSLRASDWVILNCSFSRPDRPASVHWFRNRGQGRVPVRESPHHHLAESFLFLPQVSPMDSGPWGCILTYRDGFNVSIMYNLTVLGLEPPTPLTVYAGAGSRVGLPCRLPAGVGTRSFLTAKWTPPGGGPDLLVTGDNGDFTLRLEDVSQAQAGTYTCHIHLQEQQLNATVTLAIITVTPKSFGSPGSLGKLLCEVTPVSGQERFVWSSLDTPSQRSFSGPWLEAQEAQLLSQPWQCQLYQGERLLGAAVYFTELSSPGAQRSGRAPGALPAGHLLLFLILGVLSLLLLVTGAFGFHLWRRQWRPRRFSALEQGIHPPQAQSKIEELEQEPEPEPEPEPEPEPEPEPEQL.

Positions 1 to 22 are cleaved as a signal peptide; sequence MWEAQFLGLLFLQPLWVAPVKP. Residues 23–450 are Extracellular-facing; that stretch reads LQPGAEVPVV…APGALPAGHL (428 aa). Residues 37-167 enclose the Ig-like V-type domain; the sequence is GAPAQLPCSP…LSCRLRLRLG (131 aa). Positions 37–252 are interaction with FGL1; sequence GAPAQLPCSP…LTYRDGFNVS (216 aa). Cysteine 44 and cysteine 160 are oxidised to a cystine. The disordered stretch occupies residues 62 to 97; that stretch reads TWQHQPDSGPPAAAPGHPLAPGPHPAAPSSWGPRPR. The span at 69–87 shows a compositional bias: pro residues; it reads SGPPAAAPGHPLAPGPHPA. In terms of domain architecture, Ig-like C2-type 1 spans 168 to 252; that stretch reads QASMTASPPG…LTYRDGFNVS (85 aa). N-linked (GlcNAc...) asparagine glycosylation is present at asparagine 188. An intrachain disulfide couples cysteine 189 to cysteine 241. Asparagine 250 and asparagine 256 each carry an N-linked (GlcNAc...) asparagine glycan. 2 Ig-like C2-type domains span residues 265 to 343 and 348 to 419; these read PTPL…QQLN and LAII…QGER. An intrachain disulfide couples cysteine 282 to cysteine 333. N-linked (GlcNAc...) asparagine glycosylation is present at asparagine 343. Residues cysteine 369 and cysteine 412 are joined by a disulfide bond. The connecting peptide stretch occupies residues 429 to 450; the sequence is ELSSPGAQRSGRAPGALPAGHL. The chain crosses the membrane as a helical span at residues 451–471; the sequence is LLFLILGVLSLLLLVTGAFGF. The Cytoplasmic segment spans residues 472–525; it reads HLWRRQWRPRRFSALEQGIHPPQAQSKIEELEQEPEPEPEPEPEPEPEPEPEQL. The interval 487–525 is disordered; the sequence is EQGIHPPQAQSKIEELEQEPEPEPEPEPEPEPEPEPEQL. The short motif at 498–503 is the KIEELE motif element; sequence KIEELE. The tract at residues 501–524 is 12 X 2 AA tandem repeats of E-X; the sequence is ELEQEPEPEPEPEPEPEPEPEPEQ. Residues 502-525 are compositionally biased toward acidic residues; that stretch reads LEQEPEPEPEPEPEPEPEPEPEQL.

The protein belongs to the LAG3 family. As to quaternary structure, interacts with MHC class II (MHC-II); selectively recognizes stable complexes of peptide and MHC-II. Interacts with FGL1 (via the Fibrinogen C-terminal domain). Proteolytically cleaved by ADAM10 and ADAM17 within the connecting peptide region, leading to release of Secreted lymphocyte activation gene 3 protein (sLAG-3). ADAM10 mediates constitutive cleavage, but cleavage increases following T-cell activation, whereas shedding by ADAM17 is induced by TCR signaling in a PRKCQ-dependent manner. Primarily expressed in activated T-cells and a subset of natural killer (NK) cells.

The protein resides in the cell membrane. The protein localises to the secreted. Functionally, lymphocyte activation gene 3 protein: Inhibitory receptor on antigen activated T-cells. Delivers inhibitory signals upon binding to ligands, such as FGL1. FGL1 constitutes a major ligand of LAG3 and is responsible for LAG3 T-cell inhibitory function. Following TCR engagement, LAG3 associates with CD3-TCR in the immunological synapse and directly inhibits T-cell activation. May inhibit antigen-specific T-cell activation in synergy with PDCD1/PD-1, possibly by acting as a coreceptor for PDCD1/PD-1. Negatively regulates the proliferation, activation, effector function and homeostasis of both CD8(+) and CD4(+) T-cells. Also mediates immune tolerance: constitutively expressed on a subset of regulatory T-cells (Tregs) and contributes to their suppressive function. Also acts as a negative regulator of plasmacytoid dendritic cell (pDCs) activation. Binds MHC class II (MHC-II); the precise role of MHC-II-binding is however unclear. May function as a ligand for MHC class II (MHC-II) on antigen-presenting cells (APC), promoting APC activation/maturation and driving Th1 immune response. This is Lymphocyte activation gene 3 protein from Homo sapiens (Human).